A 332-amino-acid chain; its full sequence is DNA-directed RNA polymerase subunit alpha (332 aa).

Residues 1-234 (MTVTVSQVLR…DQLSVFGDFT (234 aa)) are alpha N-terminal domain (alpha-NTD). The alpha C-terminal domain (alpha-CTD) stretch occupies residues 248–332 (VDPVLLRPID…PGVSQYGMLG (85 aa)).

It belongs to the RNA polymerase alpha chain family. As to quaternary structure, homodimer. The RNAP catalytic core consists of 2 alpha, 1 beta, 1 beta' and 1 omega subunit. When a sigma factor is associated with the core the holoenzyme is formed, which can initiate transcription.

The catalysed reaction is RNA(n) + a ribonucleoside 5'-triphosphate = RNA(n+1) + diphosphate. In terms of biological role, DNA-dependent RNA polymerase catalyzes the transcription of DNA into RNA using the four ribonucleoside triphosphates as substrates. In Xylella fastidiosa (strain M23), this protein is DNA-directed RNA polymerase subunit alpha.